The chain runs to 74 residues: Large ribosomal subunit protein uL29 (74 aa).

It belongs to the universal ribosomal protein uL29 family.

This Streptomyces coelicolor (strain ATCC BAA-471 / A3(2) / M145) protein is Large ribosomal subunit protein uL29 (rpmC).